We begin with the raw amino-acid sequence, 234 residues long: NLP effector protein Pc576423 (234 aa).

Residues 1-18 (MNLRAIAVTFATFAGANA) form the signal peptide. Asn35 and Asn66 each carry an N-linked (GlcNAc...) asparagine glycan. The Hepta-peptide GHRHDWE motif signature appears at 119 to 125 (GHRHDWE).

It belongs to the Necrosis inducing protein (NPP1) family.

The protein resides in the secreted. Secreted effector that contributes strongly to virulence during infection by P.capsici. The sequence is that of NLP effector protein Pc576423 from Phytophthora capsici.